A 133-amino-acid chain; its full sequence is Large ribosomal subunit protein bL20 (133 aa).

It belongs to the bacterial ribosomal protein bL20 family.

Its function is as follows. Binds directly to 23S ribosomal RNA and is necessary for the in vitro assembly process of the 50S ribosomal subunit. It is not involved in the protein synthesizing functions of that subunit. The protein is Large ribosomal subunit protein bL20 of Bartonella bacilliformis (strain ATCC 35685 / KC583 / Herrer 020/F12,63).